An 820-amino-acid polypeptide reads, in one-letter code: Serine/threonine-protein phosphatase 4 regulatory subunit 3 (820 aa).

Positions methionine 1–valine 100 constitute a WH1 domain. Disordered regions lie at residues glutamate 687–glutamate 711 and alanine 750–serine 820. Residues glutamate 701 to glutamate 711 are compositionally biased toward basic and acidic residues. Positions alanine 750–serine 761 are enriched in polar residues. Over residues serine 770–threonine 784 the composition is skewed to low complexity. A compositionally biased stretch (acidic residues) spans tyrosine 798 to aspartate 809.

The protein belongs to the SMEK family. As to quaternary structure, serine/threonine-protein phosphatase 4 (PP4) occurs in different assemblies of the catalytic and one or more regulatory subunits.

In terms of biological role, regulatory subunit of serine/threonine-protein phosphatase 4 (PP4). The polypeptide is Serine/threonine-protein phosphatase 4 regulatory subunit 3 (Xenopus tropicalis (Western clawed frog)).